The following is a 127-amino-acid chain: Small ribosomal subunit protein uS12 (127 aa).

Residues 1 to 28 (MPTIQQLIRDERSKAKRKTKSPALKQCP) form a disordered region. The residue at position 89 (Asp89) is a 3-methylthioaspartic acid. The interval 104-127 (ATGVKNRQKARSKYGTKRPKPAAK) is disordered. Residues 109–127 (NRQKARSKYGTKRPKPAAK) show a composition bias toward basic residues.

It belongs to the universal ribosomal protein uS12 family. In terms of assembly, part of the 30S ribosomal subunit. Contacts proteins S8 and S17. May interact with IF1 in the 30S initiation complex.

Functionally, with S4 and S5 plays an important role in translational accuracy. Its function is as follows. Interacts with and stabilizes bases of the 16S rRNA that are involved in tRNA selection in the A site and with the mRNA backbone. Located at the interface of the 30S and 50S subunits, it traverses the body of the 30S subunit contacting proteins on the other side and probably holding the rRNA structure together. The combined cluster of proteins S8, S12 and S17 appears to hold together the shoulder and platform of the 30S subunit. The chain is Small ribosomal subunit protein uS12 from Microcystis aeruginosa (strain NIES-843 / IAM M-2473).